The primary structure comprises 532 residues: 2,3-bisphosphoglycerate-independent phosphoglycerate mutase (532 aa).

2 residues coordinate Mn(2+): D15 and S65. The active-site Phosphoserine intermediate is the S65. Substrate-binding positions include H126, 156–157, R188, R194, 258–261, and K331; these read RD and RPDR. Mn(2+) contacts are provided by D398, H402, D439, H440, and H457.

This sequence belongs to the BPG-independent phosphoglycerate mutase family. Monomer. Requires Mn(2+) as cofactor.

The catalysed reaction is (2R)-2-phosphoglycerate = (2R)-3-phosphoglycerate. The protein operates within carbohydrate degradation; glycolysis; pyruvate from D-glyceraldehyde 3-phosphate: step 3/5. Functionally, catalyzes the interconversion of 2-phosphoglycerate and 3-phosphoglycerate. This chain is 2,3-bisphosphoglycerate-independent phosphoglycerate mutase, found in Synechococcus elongatus (strain ATCC 33912 / PCC 7942 / FACHB-805) (Anacystis nidulans R2).